The chain runs to 20 residues: Cathepsin L1 (20 aa).

Basic and acidic residues predominate over residues 1-10 (AVPDKIDPRE). The tract at residues 1–20 (AVPDKIDPRESGYVTGVKDQ) is disordered.

It belongs to the peptidase C1 family. Dimer of a heavy and a light chain linked by disulfide bonds.

It localises to the lysosome. The catalysed reaction is Specificity close to that of papain. As compared to cathepsin B, cathepsin L exhibits higher activity toward protein substrates, but has little activity on Z-Arg-Arg-NHMec, and no peptidyl-dipeptidase activity.. Functionally, thiol protease that assists the parasite in burrowing through the gut wall and liver of its mammalian host. The protein is Cathepsin L1 of Fasciola hepatica (Liver fluke).